A 480-amino-acid chain; its full sequence is RNA-binding protein 42 (480 aa).

The tract at residues 1–30 is disordered; it reads MAGAGPAPGLPGAGGPVVPGPGAGIPGKSG. Ala-2 carries the N-acetylalanine modification. Positions 11 to 27 are enriched in gly residues; the sequence is PGAGGPVVPGPGAGIPG. The residue at position 135 (Ser-135) is a Phosphoserine. Residues Arg-153, Arg-158, Arg-168, and Arg-181 each carry the asymmetric dimethylarginine modification. A necessary for interaction with HNRNPK region spans residues 236-480; it reads ELGLGLGLGL…QKEKKKLGLR (245 aa). The tract at residues 319 to 356 is disordered; sequence SLRPRPRPPRPEPPPGLMALEVPEPLGEDKKKGKPEKL. The span at 345 to 356 shows a compositional bias: basic and acidic residues; it reads GEDKKKGKPEKL. The RRM domain occupies 381 to 459; that stretch reads FRIFCGDLGN…RPIKLRKSMW (79 aa).

The protein belongs to the RRM RBM42 family. As to quaternary structure, interacts with HNRNPK.

The protein resides in the nucleus. It localises to the cytoplasm. Binds (via the RRM domain) to the 3'-untranslated region (UTR) of CDKN1A mRNA. In Homo sapiens (Human), this protein is RNA-binding protein 42 (RBM42).